Consider the following 486-residue polypeptide: Nucleolar GTP-binding protein 2 (486 aa).

The segment at 1–20 (MGTGKKEKSRRIREGDTKDG) is disordered. Residues S60, S85, and S155 each carry the phosphoserine modification. One can recognise a CP-type G domain in the interval 212–373 (WNELYKVIDS…LIDCPGIVPP (162 aa)). Residues 322-329 (GYPNTGKS) and 366-370 (DCPGI) contribute to the GTP site.

This sequence belongs to the TRAFAC class YlqF/YawG GTPase family. NOG2 subfamily.

It localises to the nucleus. Its subcellular location is the nucleolus. GTPase that associates with pre-60S ribosomal subunits in the nucleolus and is required for their nuclear export and maturation. The protein is Nucleolar GTP-binding protein 2 (NOG2) of Saccharomyces cerevisiae (strain ATCC 204508 / S288c) (Baker's yeast).